Here is a 1041-residue protein sequence, read N- to C-terminus: MSSQQFPRQAVSMPPPQVSNSGASVGQNVQGDEVAREIDVQSRDPLGASTVLPSRDDKQEPVVVRPYPQVQMLTSHHPLQPAPSLTMTAQPAHLTSAVPLSFSENILKTPKSTMPSRPIAPAPPSALSAVPKVSGQGTVTMESGLPQTSAIPVATISGQQGHPNSLHHIMAATNVQMSIIRSGAPGPPLHIGASHLPRGAAAAAVMSSSKVTTMLRPASAQIPSAAASQSATQHIIHPPIQSRPPVTTTSVSPAVVATVSATRAQSPVITTTPAHAAEPVLRPTLAFQQHPPPAAISIQRSAQARDAATTRITLPTHPALGGQKPQLHAMTQKTLFGTGNPVAAATVAPILATNTLPSVTTSGSAPHTQVSTSTIVTMTMPTHSSHATAGTASNIPVAKVVPQQITHTSPRIQSEYGTERGNLIPIPGHRASPNPMTMEARSENRQPVPVQLQYFLPTYPPSAYPLTAHTYTPITSSVSTIRQYPVSAQAPNSAITAQSVASTVHLNPMQLINMDTSHTRHIQGIQPAPVSAQGIQPSPFSAQGIQATPISTQGIHPTPINTQAIHPATSITNQGVQTSSVSSQQASSEPKSSVVLAEGATIIANPINSSFSATPAGTTVMQSHSQSPGIGSSPAQGSSPRPSILRKKPATEGLSVRKSLIPPHPGDAVSPRHDSALRSTSASPRPAGAKPKADLHVSVAPGVTGDPGAADQPSAAASLPSSHHPTAAVPSPPSQPVSGPMPSSIHITPATIPALSAPPPLLSNAPSGAVMPEDKMKEEAEPMDILRPVSAVPPLPPNSISSPLTVLANNISGPAGELPPGASPRKKPRKQQHVISTEEGDMMETNSTDEERCHAVKPFTSRPEKRKSPPKEYIDEEGVRYVPVRPRPPITLLRHYRNPWKAAYHHFQRYTDVRVKEEKKLTLQDVANQKGITCRVQGWKTHLCAAQLLQLIKLEQDVFERLTVLQEGLVPKKKTATDDDLHRINELIQGNMQRCKLVMDQITESRDCMLKVLDHKDRVLKLLNKSGASRRLSKVKPKDKM.

Disordered stretches follow at residues 1–62 (MSSQ…QEPV), 111–131 (KSTMPSRPIAPAPPSALSAVP), 572–592 (TNQGVQTSSVSSQQASSEPKS), 614–769 (TPAG…PSGA), and 806–852 (VLAN…DEER). Residues 18-30 (VSNSGASVGQNVQ) are compositionally biased toward polar residues. The span at 33-42 (EVAREIDVQS) shows a compositional bias: basic and acidic residues. Positions 576-592 (VQTSSVSSQQASSEPKS) are enriched in low complexity. Positions 614–641 (TPAGTTVMQSHSQSPGIGSSPAQGSSPR) are enriched in polar residues. Over residues 707-728 (PGAADQPSAAASLPSSHHPTAA) the composition is skewed to low complexity.

Belongs to the SAP130 family.

Its subcellular location is the nucleus. Acts as a transcriptional repressor. The chain is Histone deacetylase complex subunit SAP130-B (sap130-b) from Xenopus laevis (African clawed frog).